The primary structure comprises 454 residues: Chromosomal replication initiator protein DnaA (454 aa).

The tract at residues 1 to 77 is domain I, interacts with DnaA modulators; it reads MASLNENQKF…GFEVFGRMID (77 aa). The tract at residues 77 to 115 is domain II; sequence DYELYANDELTDIELRRLNNQSPVDEPLSVAKPTSPLVS. Positions 116–332 are domain III, AAA+ region; sequence GLNEKYNFEN…GALNRVEFVA (217 aa). Positions 160, 162, 163, and 164 each coordinate ATP. The interval 333–454 is domain IV, binds dsDNA; the sequence is RANGISIVDI…KDIDSIKRKF (122 aa).

It belongs to the DnaA family. As to quaternary structure, oligomerizes as a right-handed, spiral filament on DNA at oriC.

The protein localises to the cytoplasm. Its function is as follows. Plays an essential role in the initiation and regulation of chromosomal replication. ATP-DnaA binds to the origin of replication (oriC) to initiate formation of the DNA replication initiation complex once per cell cycle. Binds the DnaA box (a 9 base pair repeat at the origin) and separates the double-stranded (ds)DNA. Forms a right-handed helical filament on oriC DNA; dsDNA binds to the exterior of the filament while single-stranded (ss)DNA is stabiized in the filament's interior. The ATP-DnaA-oriC complex binds and stabilizes one strand of the AT-rich DNA unwinding element (DUE), permitting loading of DNA polymerase. After initiation quickly degrades to an ADP-DnaA complex that is not apt for DNA replication. Binds acidic phospholipids. This is Chromosomal replication initiator protein DnaA from Lactococcus lactis subsp. cremoris (strain MG1363).